Reading from the N-terminus, the 204-residue chain is Holliday junction branch migration complex subunit RuvA (204 aa).

The domain I stretch occupies residues 1–63; the sequence is MIGWLQGRVL…EDGQFLYGFS (63 aa). Positions 64–142 are domain II; it reads SFLQRQLFRE…KNDLFLCDES (79 aa). Residues 143–152 form a flexible linker region; the sequence is ESSRAPIALS. The domain III stretch occupies residues 152–204; that stretch reads SASEEAIQALIALELAPAEAELWVKKAQKTLAEDADSAALIKTAFALRLQGAK.

It belongs to the RuvA family. Homotetramer. Forms an RuvA(8)-RuvB(12)-Holliday junction (HJ) complex. HJ DNA is sandwiched between 2 RuvA tetramers; dsDNA enters through RuvA and exits via RuvB. An RuvB hexamer assembles on each DNA strand where it exits the tetramer. Each RuvB hexamer is contacted by two RuvA subunits (via domain III) on 2 adjacent RuvB subunits; this complex drives branch migration. In the full resolvosome a probable DNA-RuvA(4)-RuvB(12)-RuvC(2) complex forms which resolves the HJ.

It is found in the cytoplasm. The RuvA-RuvB-RuvC complex processes Holliday junction (HJ) DNA during genetic recombination and DNA repair, while the RuvA-RuvB complex plays an important role in the rescue of blocked DNA replication forks via replication fork reversal (RFR). RuvA specifically binds to HJ cruciform DNA, conferring on it an open structure. The RuvB hexamer acts as an ATP-dependent pump, pulling dsDNA into and through the RuvAB complex. HJ branch migration allows RuvC to scan DNA until it finds its consensus sequence, where it cleaves and resolves the cruciform DNA. The protein is Holliday junction branch migration complex subunit RuvA of Dichelobacter nodosus (strain VCS1703A).